Consider the following 213-residue polypeptide: 3,4-dihydroxy-2-butanone 4-phosphate synthase (213 aa).

D-ribulose 5-phosphate is bound by residues 37–38 (RE), D42, 150–154 (RPGHT), and E174. E38 is a binding site for Mg(2+). H153 is a Mg(2+) binding site.

It belongs to the DHBP synthase family. As to quaternary structure, homodimer. Requires Mg(2+) as cofactor. Mn(2+) is required as a cofactor.

It catalyses the reaction D-ribulose 5-phosphate = (2S)-2-hydroxy-3-oxobutyl phosphate + formate + H(+). Its pathway is cofactor biosynthesis; riboflavin biosynthesis; 2-hydroxy-3-oxobutyl phosphate from D-ribulose 5-phosphate: step 1/1. Functionally, catalyzes the conversion of D-ribulose 5-phosphate to formate and 3,4-dihydroxy-2-butanone 4-phosphate. The chain is 3,4-dihydroxy-2-butanone 4-phosphate synthase from Clostridium botulinum (strain Langeland / NCTC 10281 / Type F).